A 415-amino-acid polypeptide reads, in one-letter code: Gamma-glutamyl phosphate reductase (415 aa).

The protein belongs to the gamma-glutamyl phosphate reductase family.

It localises to the cytoplasm. It catalyses the reaction L-glutamate 5-semialdehyde + phosphate + NADP(+) = L-glutamyl 5-phosphate + NADPH + H(+). The protein operates within amino-acid biosynthesis; L-proline biosynthesis; L-glutamate 5-semialdehyde from L-glutamate: step 2/2. Functionally, catalyzes the NADPH-dependent reduction of L-glutamate 5-phosphate into L-glutamate 5-semialdehyde and phosphate. The product spontaneously undergoes cyclization to form 1-pyrroline-5-carboxylate. This chain is Gamma-glutamyl phosphate reductase, found in Bacillus cereus (strain AH187).